We begin with the raw amino-acid sequence, 395 residues long: Altered inheritance of mitochondria protein 39, mitochondrial (395 aa).

A helical transmembrane segment spans residues 156 to 176 (QIWSAIFGGIFGVILGYSLIY).

It belongs to the AIM39 family.

The protein localises to the mitochondrion membrane. In Saccharomyces cerevisiae (strain ATCC 204508 / S288c) (Baker's yeast), this protein is Altered inheritance of mitochondria protein 39, mitochondrial (AIM39).